The primary structure comprises 123 residues: Modulator protein MzrA (123 aa).

The Cytoplasmic portion of the chain corresponds to 1–8 (MIKRPRWQ). The helical transmembrane segment at 9-29 (YVLLIALALLALATLLVPCMV) threads the bilayer. The Periplasmic portion of the chain corresponds to 30 to 123 (RTESELRIRA…EFARAPLNLG (94 aa)).

It belongs to the MzrA family. In terms of assembly, interacts with EnvZ.

It localises to the cell inner membrane. Modulates the activity of the EnvZ/OmpR two-component regulatory system, probably by directly modulating EnvZ enzymatic activity and increasing stability of phosphorylated OmpR. The protein is Modulator protein MzrA of Serratia proteamaculans (strain 568).